We begin with the raw amino-acid sequence, 213 residues long: Cytokinin riboside 5'-monophosphate phosphoribohydrolase LOG2 (213 aa).

Residues Glu79, 97 to 98, 114 to 120, and Thr126 each bind substrate; these read RK and GYGTFEE.

It belongs to the LOG family. Expressed in roots and shoots. Detected in root hairs.

Its subcellular location is the cytoplasm. It localises to the nucleus. It catalyses the reaction N(6)-(dimethylallyl)adenosine 5'-phosphate + H2O = N(6)-dimethylallyladenine + D-ribose 5-phosphate. It carries out the reaction 9-ribosyl-trans-zeatin 5'-phosphate + H2O = trans-zeatin + D-ribose 5-phosphate. Cytokinin-activating enzyme working in the direct activation pathway. Phosphoribohydrolase that converts inactive cytokinin nucleotides to the biologically active free-base forms. In Arabidopsis thaliana (Mouse-ear cress), this protein is Cytokinin riboside 5'-monophosphate phosphoribohydrolase LOG2 (LOG2).